The chain runs to 105 residues: N(4)-acetylcytidine amidohydrolase (105 aa).

One can recognise an ASCH domain in the interval T7–E93. K21 (proton acceptor) is an active-site residue. Catalysis depends on T24, which acts as the Nucleophile. E74 serves as the catalytic Proton donor.

The protein belongs to the N(4)-acetylcytidine amidohydrolase family.

The enzyme catalyses N(4)-acetylcytidine + H2O = cytidine + acetate + H(+). It carries out the reaction N(4)-acetyl-2'-deoxycytidine + H2O = 2'-deoxycytidine + acetate + H(+). The catalysed reaction is N(4)-acetylcytosine + H2O = cytosine + acetate + H(+). Its function is as follows. Catalyzes the hydrolysis of N(4)-acetylcytidine (ac4C). The polypeptide is N(4)-acetylcytidine amidohydrolase (Shewanella baltica (strain OS185)).